Here is a 204-residue protein sequence, read N- to C-terminus: Large ribosomal subunit protein eL15 (204 aa).

The protein belongs to the eukaryotic ribosomal protein eL15 family.

This is Large ribosomal subunit protein eL15 (RpL15) from Chironomus tentans (Midge).